The following is a 287-amino-acid chain: Nucleotide-binding protein mma_3120 (287 aa).

8–15 (GISGSGKS) serves as a coordination point for ATP. Residue 57 to 60 (DARS) coordinates GTP.

It belongs to the RapZ-like family.

Functionally, displays ATPase and GTPase activities. The protein is Nucleotide-binding protein mma_3120 of Janthinobacterium sp. (strain Marseille) (Minibacterium massiliensis).